The primary structure comprises 380 residues: Cytochrome b (380 aa).

4 consecutive transmembrane segments (helical) span residues 33–53 (FGSL…FLAM), 77–98 (WLIR…YLHI), 113–133 (WNVG…GYVL), and 178–198 (FFAF…IHLI). Heme b-binding residues include histidine 83 and histidine 97. Residues histidine 182 and histidine 196 each coordinate heme b. Residue histidine 201 coordinates a ubiquinone. 4 helical membrane-spanning segments follow: residues 226–246 (YKDL…ALFS), 288–308 (LGGV…PILH), 320–340 (FSQF…WIGG), and 347–367 (FVII…VMIP).

This sequence belongs to the cytochrome b family. As to quaternary structure, the cytochrome bc1 complex contains 3 respiratory subunits (MT-CYB, CYC1 and UQCRFS1), 2 core proteins (UQCRC1 and UQCRC2) and probably 6 low-molecular weight proteins. It depends on heme b as a cofactor.

The protein resides in the mitochondrion inner membrane. Functionally, component of the ubiquinol-cytochrome c reductase complex (complex III or cytochrome b-c1 complex) that is part of the mitochondrial respiratory chain. The b-c1 complex mediates electron transfer from ubiquinol to cytochrome c. Contributes to the generation of a proton gradient across the mitochondrial membrane that is then used for ATP synthesis. The chain is Cytochrome b (mt-cyb) from Paralichthys olivaceus (Bastard halibut).